The sequence spans 137 residues: Flagellar basal body rod protein FlgB (137 aa).

This sequence belongs to the flagella basal body rod proteins family. The basal body constitutes a major portion of the flagellar organelle and consists of a number of rings mounted on a central rod. In Gram-negative bacteria, at least four rings, L, P, S and M are present, whereas Gram-positive bacteria lack the L and P rings. The rod consists of about 26 subunits of FlgG in the distal portion, and FlgB, FlgC and FlgF build up the proximal portion of the rod with about 6 subunits each. Rod assembly occurs by export via the flagellum-specific pathway of its constituent proteins and by their incorporation into the rod structure in the probable order of FlgB, FlgC, FlgF and FlgG. Another protein, FliE, also assembles onto the stable rod structure.

It is found in the bacterial flagellum basal body. In terms of biological role, structural component of flagellum, the bacterial motility apparatus. Part of the rod structure of flagellar basal body. The chain is Flagellar basal body rod protein FlgB from Yersinia ruckeri.